The following is a 369-amino-acid chain: tRNA/tmRNA (uracil-C(5))-methyltransferase (369 aa).

5 residues coordinate S-adenosyl-L-methionine: Gln190, Tyr218, Asn223, Glu239, and Asp301. The active-site Nucleophile is Cys326. The active-site Proton acceptor is the Glu360.

Belongs to the class I-like SAM-binding methyltransferase superfamily. RNA M5U methyltransferase family. TrmA subfamily.

The catalysed reaction is uridine(54) in tRNA + S-adenosyl-L-methionine = 5-methyluridine(54) in tRNA + S-adenosyl-L-homocysteine + H(+). It catalyses the reaction uridine(341) in tmRNA + S-adenosyl-L-methionine = 5-methyluridine(341) in tmRNA + S-adenosyl-L-homocysteine + H(+). Its function is as follows. Dual-specificity methyltransferase that catalyzes the formation of 5-methyluridine at position 54 (m5U54) in all tRNAs, and that of position 341 (m5U341) in tmRNA (transfer-mRNA). The chain is tRNA/tmRNA (uracil-C(5))-methyltransferase from Vibrio parahaemolyticus serotype O3:K6 (strain RIMD 2210633).